Here is a 486-residue protein sequence, read N- to C-terminus: Cardiolipin synthase A (486 aa).

2 consecutive transmembrane segments (helical) span residues 3-23 (TFYTVISWLSVFGYWLLIAGV) and 38-58 (MAWLLIIYILPLVGIIAYLSF). PLD phosphodiesterase domains lie at 219 to 246 (MDLRQHRKIVLIDNYVAYTGSMNMVDPR) and 399 to 426 (EGGLLHSKSVLVDGQLSLVGTVNLDMRS). Active-site residues include H224, K226, D231, H404, K406, and D411.

The protein belongs to the phospholipase D family. Cardiolipin synthase subfamily. ClsA sub-subfamily.

The protein localises to the cell inner membrane. The enzyme catalyses 2 a 1,2-diacyl-sn-glycero-3-phospho-(1'-sn-glycerol) = a cardiolipin + glycerol. Functionally, catalyzes the reversible phosphatidyl group transfer from one phosphatidylglycerol molecule to another to form cardiolipin (CL) (diphosphatidylglycerol) and glycerol. This is Cardiolipin synthase A from Yersinia pseudotuberculosis serotype IB (strain PB1/+).